An 845-amino-acid chain; its full sequence is Alanine--tRNA ligase (845 aa).

4 residues coordinate Zn(2+): His552, His556, Cys653, and His657.

The protein belongs to the class-II aminoacyl-tRNA synthetase family. Zn(2+) is required as a cofactor.

It is found in the cytoplasm. It catalyses the reaction tRNA(Ala) + L-alanine + ATP = L-alanyl-tRNA(Ala) + AMP + diphosphate. In terms of biological role, catalyzes the attachment of alanine to tRNA(Ala) in a two-step reaction: alanine is first activated by ATP to form Ala-AMP and then transferred to the acceptor end of tRNA(Ala). Also edits incorrectly charged Ser-tRNA(Ala) and Gly-tRNA(Ala) via its editing domain. The sequence is that of Alanine--tRNA ligase from Campylobacter fetus subsp. fetus (strain 82-40).